The primary structure comprises 117 residues: uncharacterized protein (117 aa).

2 helical membrane passes run Ala43–Leu63 and Ala73–Val93.

The protein localises to the cell membrane. This is an uncharacterized protein from Bacillus subtilis (strain 168).